The following is a 359-amino-acid chain: tRNA-specific 2-thiouridylase MnmA (359 aa).

ATP-binding positions include 6–13 (AMSGGVDS) and Leu-32. Cys-101 acts as the Nucleophile in catalysis. Cysteines 101 and 193 form a disulfide. Gly-125 serves as a coordination point for ATP. Positions 143-145 (KDQ) are interaction with tRNA. Cys-193 acts as the Cysteine persulfide intermediate in catalysis.

It belongs to the MnmA/TRMU family.

It localises to the cytoplasm. The catalysed reaction is S-sulfanyl-L-cysteinyl-[protein] + uridine(34) in tRNA + AH2 + ATP = 2-thiouridine(34) in tRNA + L-cysteinyl-[protein] + A + AMP + diphosphate + H(+). Functionally, catalyzes the 2-thiolation of uridine at the wobble position (U34) of tRNA, leading to the formation of s(2)U34. This Mycobacterium sp. (strain KMS) protein is tRNA-specific 2-thiouridylase MnmA.